Here is a 479-residue protein sequence, read N- to C-terminus: Beta-monoglucosyldiacylglycerol synthase (479 aa).

A run of 4 helical transmembrane segments spans residues 48-68 (AAVM…WVWG), 363-383 (FLLM…MALW), 389-409 (LLTP…YYGL), and 428-448 (LART…MPAV).

Belongs to the glycosyltransferase 2 family. It depends on Mg(2+) as a cofactor.

The protein localises to the membrane. It carries out the reaction a 1,2-diacyl-sn-glycerol + UDP-alpha-D-glucose = a 1,2-diacyl-3-O-(beta-D-glucopyranosyl)-sn-glycerol + UDP + H(+). Its function is as follows. Glucosyltransferase involved in the biosynthesis of the non-bilayer-forming membrane lipid beta-monoglucosyldiacylglycerol which contributes to regulate the properties and stability of the membrane. Catalyzes the transfer of a glucosyl residue from UDP-Glc to diacylglycerol (DAG) acceptor to form the corresponding beta-glucosyl-DAG (1,2-diacyl-3-O-(beta-D-glucopyranosyl)-sn-glycerol). It can only use UDP-Glc as sugar donor. Two types of DAG (dipalmitoyl-DAG (DPDAG) and 1-oleoyl-2-palmitoyl-DAG (OPDAG)) can be used as sugar acceptors, but OPDAG is preferred. This is Beta-monoglucosyldiacylglycerol synthase from Synechocystis sp. (strain ATCC 27184 / PCC 6803 / Kazusa).